Reading from the N-terminus, the 201-residue chain is Small ribosomal subunit protein uS4c (201 aa).

Residues 15-43 form a disordered region; the sequence is LGALPGLTSKRPSPGSDLRNQSRSGKRSQ. The region spanning 89 to 150 is the S4 RNA-binding domain; the sequence is MRLDNILFRL…EQRSRALIQK (62 aa).

The protein belongs to the universal ribosomal protein uS4 family. In terms of assembly, part of the 30S ribosomal subunit. Contacts protein S5. The interaction surface between S4 and S5 is involved in control of translational fidelity.

It is found in the plastid. It localises to the chloroplast. Functionally, one of the primary rRNA binding proteins, it binds directly to 16S rRNA where it nucleates assembly of the body of the 30S subunit. With S5 and S12 plays an important role in translational accuracy. This Ceratophyllum demersum (Rigid hornwort) protein is Small ribosomal subunit protein uS4c (rps4).